A 546-amino-acid chain; its full sequence is Thermolysin (546 aa).

The signal sequence occupies residues 1–25 (MDKRAMLGAIGLAFGLMAWPFGASA). A propeptide spans 26–228 (KEKSMVWNEQ…EAKPGGGQPV (203 aa)) (activation peptide). Positions 287, 289, 291, and 368 each coordinate Ca(2+). Histidine 372 contacts Zn(2+). Glutamate 373 is a catalytic residue. Zn(2+) contacts are provided by histidine 376 and glutamate 396. 8 residues coordinate Ca(2+): asparagine 413, aspartate 415, glutamate 417, glutamate 420, tyrosine 423, threonine 424, isoleucine 427, and aspartate 430. Histidine 461 acts as the Proton donor in catalysis.

It belongs to the peptidase M4 family. Ca(2+) serves as cofactor. Requires Zn(2+) as cofactor.

It is found in the secreted. It carries out the reaction Preferential cleavage: Xaa-|-Leu &gt; Xaa-|-Phe.. Its function is as follows. Extracellular zinc metalloprotease. Has collagenase activity. The sequence is that of Thermolysin (npr) from Bacillus sp. (strain EA1).